Consider the following 234-residue polypeptide: Kappa-casein (234 aa).

Positions 1–21 are cleaved as a signal peptide; the sequence is MMKSFLLVVNIVALTLPFLAA. Tandem repeats lie at residues 127 to 153, 154 to 179, and 180 to 207. Residues 127–207 form a 3 X 27 AA tandem repeats region; the sequence is LGKATILSTD…AVPSEEPRES (81 aa). The tract at residues 143-234 is disordered; the sequence is QTPVSAAQPT…STGPAIASMA (92 aa). O-linked (GalNAc...) threonine glycosylation occurs at Thr-144. The segment covering 144–171 has biased composition (polar residues); sequence TPVSAAQPTVSAGDTPEVSSQFIDTPDT. Residue Thr-158 is modified to Phosphothreonine. Position 162 is a phosphoserine; alternate (Ser-162). Ser-162 is a glycosylation site (O-linked (GalNAc...) serine; alternate).

This sequence belongs to the kappa-casein family. As to expression, mammary gland specific. Secreted in milk.

The protein resides in the secreted. Its function is as follows. Kappa-casein stabilizes micelle formation, preventing casein precipitation in milk. The sequence is that of Kappa-casein (CSN3) from Cavia porcellus (Guinea pig).